We begin with the raw amino-acid sequence, 215 residues long: Protein NETWORKED 3B (215 aa).

An NAB domain is found at 5–90 (SKWWWIGANH…QKHDLLIKTS (86 aa)). Residues 134–165 (DETMKEELEILREENRVYKEKKEVVTRLLANL) adopt a coiled-coil conformation.

It belongs to the NET family. In terms of assembly, interacts with F-actin.

Functionally, plant-specific actin binding protein. May be part of a membrane-cytoskeletal adapter complex. This is Protein NETWORKED 3B from Arabidopsis thaliana (Mouse-ear cress).